The following is a 257-amino-acid chain: Enolase-phosphatase E1 (257 aa).

2 residues coordinate Mg(2+): Asp16 and Glu18. Substrate contacts are provided by residues 150 to 151 and Lys184; that span reads SS. A Mg(2+)-binding site is contributed by Asp209.

The protein belongs to the HAD-like hydrolase superfamily. MasA/MtnC family. In terms of assembly, monomer. Requires Mg(2+) as cofactor.

Its subcellular location is the cytoplasm. It localises to the nucleus. The catalysed reaction is 5-methylsulfanyl-2,3-dioxopentyl phosphate + H2O = 1,2-dihydroxy-5-(methylsulfanyl)pent-1-en-3-one + phosphate. Its pathway is amino-acid biosynthesis; L-methionine biosynthesis via salvage pathway; L-methionine from S-methyl-5-thio-alpha-D-ribose 1-phosphate: step 3/6. It functions in the pathway amino-acid biosynthesis; L-methionine biosynthesis via salvage pathway; L-methionine from S-methyl-5-thio-alpha-D-ribose 1-phosphate: step 4/6. Its function is as follows. Bifunctional enzyme that catalyzes the enolization of 2,3-diketo-5-methylthiopentyl-1-phosphate (DK-MTP-1-P) into the intermediate 2-hydroxy-3-keto-5-methylthiopentenyl-1-phosphate (HK-MTPenyl-1-P), which is then dephosphorylated to form the acireductone 1,2-dihydroxy-3-keto-5-methylthiopentene (DHK-MTPene). This chain is Enolase-phosphatase E1 (Enoph1), found in Mus musculus (Mouse).